The following is a 512-amino-acid chain: Cytochrome P450 71BT1 (512 aa).

A signal peptide spans Met-1–Lys-24. N-linked (GlcNAc...) asparagine glycosylation is found at Asn-111 and Asn-168. Cys-447 lines the heme pocket.

This sequence belongs to the cytochrome P450 family.

The sequence is that of Cytochrome P450 71BT1 from Catharanthus roseus (Madagascar periwinkle).